The chain runs to 344 residues: Holliday junction branch migration complex subunit RuvB (344 aa).

The tract at residues 1-185 is large ATPase domain (RuvB-L); sequence MSTSRSDALK…FGIDFRYDYY (185 aa). ATP contacts are provided by residues Leu24, Arg25, Gly66, Lys69, Thr70, Thr71, 132–134, Arg175, Tyr185, and Arg222; that span reads EDY. Thr70 serves as a coordination point for Mg(2+). The tract at residues 186–256 is small ATPAse domain (RuvB-S); it reads TADLLQEITQ…IADRALNALD (71 aa). A head domain (RuvB-H) region spans residues 259–344; the sequence is EEGLDDMDAR…AADQDLFDQE (86 aa). DNA is bound by residues Arg314 and Arg319.

This sequence belongs to the RuvB family. Homohexamer. Forms an RuvA(8)-RuvB(12)-Holliday junction (HJ) complex. HJ DNA is sandwiched between 2 RuvA tetramers; dsDNA enters through RuvA and exits via RuvB. An RuvB hexamer assembles on each DNA strand where it exits the tetramer. Each RuvB hexamer is contacted by two RuvA subunits (via domain III) on 2 adjacent RuvB subunits; this complex drives branch migration. In the full resolvosome a probable DNA-RuvA(4)-RuvB(12)-RuvC(2) complex forms which resolves the HJ.

It is found in the cytoplasm. It catalyses the reaction ATP + H2O = ADP + phosphate + H(+). Functionally, the RuvA-RuvB-RuvC complex processes Holliday junction (HJ) DNA during genetic recombination and DNA repair, while the RuvA-RuvB complex plays an important role in the rescue of blocked DNA replication forks via replication fork reversal (RFR). RuvA specifically binds to HJ cruciform DNA, conferring on it an open structure. The RuvB hexamer acts as an ATP-dependent pump, pulling dsDNA into and through the RuvAB complex. RuvB forms 2 homohexamers on either side of HJ DNA bound by 1 or 2 RuvA tetramers; 4 subunits per hexamer contact DNA at a time. Coordinated motions by a converter formed by DNA-disengaged RuvB subunits stimulates ATP hydrolysis and nucleotide exchange. Immobilization of the converter enables RuvB to convert the ATP-contained energy into a lever motion, pulling 2 nucleotides of DNA out of the RuvA tetramer per ATP hydrolyzed, thus driving DNA branch migration. The RuvB motors rotate together with the DNA substrate, which together with the progressing nucleotide cycle form the mechanistic basis for DNA recombination by continuous HJ branch migration. Branch migration allows RuvC to scan DNA until it finds its consensus sequence, where it cleaves and resolves cruciform DNA. The polypeptide is Holliday junction branch migration complex subunit RuvB (Salinibacter ruber (strain DSM 13855 / M31)).